Here is a 174-residue protein sequence, read N- to C-terminus: Co-chaperone protein HscB homolog (174 aa).

The region spanning 2 to 74 is the J domain; sequence NYFELFKFSP…IRRAEHMLSL (73 aa).

The protein belongs to the HscB family. As to quaternary structure, interacts with HscA and stimulates its ATPase activity.

In terms of biological role, co-chaperone involved in the maturation of iron-sulfur cluster-containing proteins. Seems to help targeting proteins to be folded toward HscA. The protein is Co-chaperone protein HscB homolog of Shewanella baltica (strain OS223).